The sequence spans 261 residues: Claudin-18 (261 aa).

The Cytoplasmic portion of the chain corresponds to methionine 1–cysteine 6. A helical transmembrane segment spans residues glutamine 7–methionine 27. The Extracellular segment spans residues aspartate 28–arginine 80. A helical membrane pass occupies residues alanine 81–leucine 101. The Cytoplasmic segment spans residues lysine 102 to glycine 122. A helical transmembrane segment spans residues isoleucine 123 to leucine 143. Residues valine 144–alanine 173 are Extracellular-facing. A helical membrane pass occupies residues alanine 174–isoleucine 194. Topologically, residues alanine 195–valine 261 are cytoplasmic. Residues alanine 195–valine 261 are required for role in regulation of RANKL-induced osteoclast differentiation. Serine 214 is modified (phosphoserine). The disordered stretch occupies residues aspartate 242–valine 261.

This sequence belongs to the claudin family. Interacts with TJP2/ZO-2. Interacts with TJP1/ZO-1. Interacts with YAP1 (phosphorylated); the interaction sequesters YAP1 away from the nucleus and thereby restricts transcription of YAP1 target genes. Interacts with CLDN19. In terms of tissue distribution, expressed in the lung (at protein level).

It is found in the cell junction. Its subcellular location is the tight junction. It localises to the cell membrane. In terms of biological role, involved in alveolar fluid homeostasis via regulation of alveolar epithelial tight junction composition and therefore ion transport and solute permeability, potentially via downstream regulation of the actin cytoskeleton organization and beta-2-adrenergic signaling. Required for lung alveolarization and maintenance of the paracellular alveolar epithelial barrier. Acts to maintain epithelial progenitor cell proliferation and organ size, via regulation of YAP1 localization away from the nucleus and thereby restriction of YAP1 target gene transcription. Acts as a negative regulator of RANKL-induced osteoclast differentiation, potentially via relocation of TJP2/ZO-2 away from the nucleus, subsequently involved in bone resorption in response to calcium deficiency. Mediates the osteoprotective effects of estrogen, potentially via acting downstream of estrogen signaling independently of RANKL signaling pathways. Functionally, required for the formation of the gastric paracellular barrier via its role in tight junction formation, thereby involved in the response to gastric acidification. The sequence is that of Claudin-18 from Rattus norvegicus (Rat).